Reading from the N-terminus, the 288-residue chain is MSLDDLQAATKIQKRYLTALEEGNYDIIPGKFYVRAFIKQYAEAVGLDADQLFEEHKKDIPNTYHDDVSEKISGMNLQKEMPKPASKALELLPTILVILGVIVVIAIVYAIIQFANHKNSDDHNAASEKAITQSESKYEIPKDSTLKENQNNSSEKETDTKKETKENEDKKKENDSEKLEIKAAGTEGSLTTYEVSGADKIELELKASDSSWIRVRDENSSSLKEGTLKKDETYKKDITDQKQVDIRTGYAPNLKIKINGKVLSYELDPKKVMAQTIKIVNKKEEKSS.

A helical transmembrane segment spans residues 92 to 112; the sequence is LPTILVILGVIVVIAIVYAII. The tract at residues 121 to 183 is disordered; sequence DDHNAASEKA…NDSEKLEIKA (63 aa). 2 stretches are compositionally biased toward basic and acidic residues: residues 136–146 and 154–181; these read SKYEIPKDSTL and SEKETDTKKETKENEDKKKENDSEKLEI. Residues 147-185 adopt a coiled-coil conformation; it reads KENQNNSSEKETDTKKETKENEDKKKENDSEKLEIKAAG.

Its subcellular location is the cell membrane. This is an uncharacterized protein from Bacillus subtilis (strain 168).